The sequence spans 848 residues: Trimethylamine-N-oxide reductase 1 (848 aa).

The segment at residues 1 to 39 (MNNNDLFQASRRRFLAQLGGLTVAGMLGTSLLTPRRATA) is a signal peptide (tat-type signal). Ser191 lines the Mo-bis(molybdopterin guanine dinucleotide) pocket.

The protein belongs to the prokaryotic molybdopterin-containing oxidoreductase family. Mo-bis(molybdopterin guanine dinucleotide) is required as a cofactor. In terms of processing, predicted to be exported by the Tat system. The position of the signal peptide cleavage has not been experimentally proven.

Its subcellular location is the periplasm. The catalysed reaction is trimethylamine + 2 Fe(III)-[cytochrome c] + H2O = trimethylamine N-oxide + 2 Fe(II)-[cytochrome c] + 3 H(+). Functionally, reduces trimethylamine-N-oxide (TMAO) into trimethylamine; an anaerobic reaction coupled to energy-yielding reactions. This chain is Trimethylamine-N-oxide reductase 1 (torA), found in Escherichia coli O6:H1 (strain CFT073 / ATCC 700928 / UPEC).